We begin with the raw amino-acid sequence, 308 residues long: FGLLLGICLIVQIVTGLLLAAHYTADTSLAFASVAHMCRNVQFGWLIRNLHANGASFFFICIYLHIGRGLYYGSYLNKETWNIGVILLLTLMATAFVGYVXPWGQMSYWGATVITNLFSAIPYIGQTLVEWDWGGFSVDNPTLTRFFALHFLLPFVFAGLTLVHLTFLHETGSNKPLGIPSDCDKIPFHPYYSTKDVLGFVLMLIPLITLALFSPNLLGDPENFTPANPLATPPHIKPEWYFLFAYAILRSIPNKLGGVLALAASVLVLFLIPFLHTSKLRSMTFRPLSQILFWTLVANLLMLTWVSN.

4 helical membrane passes run 1–21 (FGLLLGICLIVQIVTGLLLAA), 45–66 (WLIRNLHANGASFFFICIYLHI), 81–101 (WNIGVILLLTLMATAFVGYVX), and 146–166 (FFALHFLLPFVFAGLTLVHLT). Residues His51 and His65 each contribute to the heme b site. Residues His150 and His164 each contribute to the heme b site. His169 is an a ubiquinone binding site. Transmembrane regions (helical) follow at residues 194–214 (TKDVLGFVLMLIPLITLALFS), 256–276 (LGGVLALAASVLVLFLIPFLH), and 288–308 (LSQILFWTLVANLLMLTWVSN).

Belongs to the cytochrome b family. The cytochrome bc1 complex contains 11 subunits: 3 respiratory subunits (MT-CYB, CYC1 and UQCRFS1), 2 core proteins (UQCRC1 and UQCRC2) and 6 low-molecular weight proteins (UQCRH/QCR6, UQCRB/QCR7, UQCRQ/QCR8, UQCR10/QCR9, UQCR11/QCR10 and a cleavage product of UQCRFS1). This cytochrome bc1 complex then forms a dimer. The cofactor is heme b.

It localises to the mitochondrion inner membrane. Functionally, component of the ubiquinol-cytochrome c reductase complex (complex III or cytochrome b-c1 complex) that is part of the mitochondrial respiratory chain. The b-c1 complex mediates electron transfer from ubiquinol to cytochrome c. Contributes to the generation of a proton gradient across the mitochondrial membrane that is then used for ATP synthesis. This is Cytochrome b (MT-CYB) from Pomatostomus ruficeps (Chestnut-crowned babbler).